The following is a 343-amino-acid chain: S-adenosylmethionine:tRNA ribosyltransferase-isomerase (343 aa).

This sequence belongs to the QueA family. In terms of assembly, monomer.

It is found in the cytoplasm. The enzyme catalyses 7-aminomethyl-7-carbaguanosine(34) in tRNA + S-adenosyl-L-methionine = epoxyqueuosine(34) in tRNA + adenine + L-methionine + 2 H(+). The protein operates within tRNA modification; tRNA-queuosine biosynthesis. Functionally, transfers and isomerizes the ribose moiety from AdoMet to the 7-aminomethyl group of 7-deazaguanine (preQ1-tRNA) to give epoxyqueuosine (oQ-tRNA). This Geobacter sulfurreducens (strain ATCC 51573 / DSM 12127 / PCA) protein is S-adenosylmethionine:tRNA ribosyltransferase-isomerase.